The following is a 306-amino-acid chain: Pyridoxal 5'-phosphate synthase subunit PdxS (306 aa).

Asp36 contributes to the D-ribose 5-phosphate binding site. Residue Lys93 is the Schiff-base intermediate with D-ribose 5-phosphate of the active site. Gly165 is a D-ribose 5-phosphate binding site. Arg177 serves as a coordination point for D-glyceraldehyde 3-phosphate. D-ribose 5-phosphate contacts are provided by residues Gly226 and 247-248 (GS).

It belongs to the PdxS/SNZ family. In terms of assembly, in the presence of PdxT, forms a dodecamer of heterodimers.

The catalysed reaction is aldehydo-D-ribose 5-phosphate + D-glyceraldehyde 3-phosphate + L-glutamine = pyridoxal 5'-phosphate + L-glutamate + phosphate + 3 H2O + H(+). It participates in cofactor biosynthesis; pyridoxal 5'-phosphate biosynthesis. Functionally, catalyzes the formation of pyridoxal 5'-phosphate from ribose 5-phosphate (RBP), glyceraldehyde 3-phosphate (G3P) and ammonia. The ammonia is provided by the PdxT subunit. Can also use ribulose 5-phosphate and dihydroxyacetone phosphate as substrates, resulting from enzyme-catalyzed isomerization of RBP and G3P, respectively. This chain is Pyridoxal 5'-phosphate synthase subunit PdxS, found in Corynebacterium urealyticum (strain ATCC 43042 / DSM 7109).